A 469-amino-acid polypeptide reads, in one-letter code: Argininosuccinate lyase (469 aa).

The protein belongs to the lyase 1 family. Argininosuccinate lyase subfamily.

It localises to the cytoplasm. The enzyme catalyses 2-(N(omega)-L-arginino)succinate = fumarate + L-arginine. Its pathway is amino-acid biosynthesis; L-arginine biosynthesis; L-arginine from L-ornithine and carbamoyl phosphate: step 3/3. This Cupriavidus metallidurans (strain ATCC 43123 / DSM 2839 / NBRC 102507 / CH34) (Ralstonia metallidurans) protein is Argininosuccinate lyase.